The following is a 455-amino-acid chain: Argininosuccinate lyase (455 aa).

This sequence belongs to the lyase 1 family. Argininosuccinate lyase subfamily.

Its subcellular location is the cytoplasm. The catalysed reaction is 2-(N(omega)-L-arginino)succinate = fumarate + L-arginine. It participates in amino-acid biosynthesis; L-arginine biosynthesis; L-arginine from L-ornithine and carbamoyl phosphate: step 3/3. The sequence is that of Argininosuccinate lyase from Roseiflexus sp. (strain RS-1).